Reading from the N-terminus, the 195-residue chain is UDP-N-acetylbacillosamine N-acetyltransferase (195 aa).

Substrate is bound by residues 13 to 15 (SGH), 35 to 36 (DD), and G56. H125 serves as the catalytic Proton acceptor. Acetyl-CoA is bound by residues H134, I155, and G173.

Belongs to the transferase hexapeptide repeat family. As to quaternary structure, homotrimer.

The catalysed reaction is UDP-N-acetylbacillosamine + acetyl-CoA = UDP-N,N'-diacetylbacillosamine + CoA + H(+). It participates in protein modification; protein glycosylation. In terms of biological role, acetyltransferase that modifies the UDP-4-amino-sugar to form UDP-N,N'-diacetylbacillosamine in the N-linked protein glycosylation pathway. The chain is UDP-N-acetylbacillosamine N-acetyltransferase (pglD) from Campylobacter jejuni subsp. jejuni serotype O:2 (strain ATCC 700819 / NCTC 11168).